Reading from the N-terminus, the 124-residue chain is MIALIAAVSAGGIAGTLLRFATTNWVAAHWPRHFYAGTLAVNLVGCLLIGLLYGLFLHKPLAPVELRAGLIVGFLGGLTTFSSFSLDTVRLMESGQVPLALGYTSISVVGGLLATWAGLSLTRF.

4 helical membrane-spanning segments follow: residues 1 to 21 (MIALIAAVSAGGIAGTLLRFA), 37 to 57 (GTLAVNLVGCLLIGLLYGLFL), 69 to 89 (GLIVGFLGGLTTFSSFSLDTV), and 99 to 119 (LALGYTSISVVGGLLATWAGL). Na(+) contacts are provided by glycine 76 and threonine 79.

The protein belongs to the fluoride channel Fluc/FEX (TC 1.A.43) family.

The protein localises to the cell inner membrane. The catalysed reaction is fluoride(in) = fluoride(out). With respect to regulation, na(+) is not transported, but it plays an essential structural role and its presence is essential for fluoride channel function. Fluoride-specific ion channel. Important for reducing fluoride concentration in the cell, thus reducing its toxicity. This Pseudomonas putida (strain ATCC 700007 / DSM 6899 / JCM 31910 / BCRC 17059 / LMG 24140 / F1) protein is Fluoride-specific ion channel FluC.